Here is a 344-residue protein sequence, read N- to C-terminus: Phosphate acyltransferase (344 aa).

Belongs to the PlsX family. In terms of assembly, homodimer. Probably interacts with PlsY.

It is found in the cytoplasm. It catalyses the reaction a fatty acyl-[ACP] + phosphate = an acyl phosphate + holo-[ACP]. It participates in lipid metabolism; phospholipid metabolism. Functionally, catalyzes the reversible formation of acyl-phosphate (acyl-PO(4)) from acyl-[acyl-carrier-protein] (acyl-ACP). This enzyme utilizes acyl-ACP as fatty acyl donor, but not acyl-CoA. The protein is Phosphate acyltransferase of Blochmanniella floridana.